Reading from the N-terminus, the 362-residue chain is GDSL esterase/lipase At5g45670 (362 aa).

The N-terminal stretch at 1–23 is a signal peptide; sequence MARMSLMIMMIMVAVTMINIAKS. Residue S36 is the Nucleophile of the active site. Residues D326 and H329 contribute to the active site.

Belongs to the 'GDSL' lipolytic enzyme family.

The protein resides in the secreted. The polypeptide is GDSL esterase/lipase At5g45670 (Arabidopsis thaliana (Mouse-ear cress)).